A 132-amino-acid polypeptide reads, in one-letter code: Dehydratase CTB10 (132 aa).

Residues proline 21 to methionine 117 form the EthD domain.

It belongs to the tpcK family.

The protein operates within mycotoxin biosynthesis. Dehydratase; part of the gene cluster that mediates the biosynthesis of cercosporin, a light-activated, non-host-selective toxin. The perylenequinone chromophore of cercosporin absorbs light energy to attain an electronically-activated triplet state and produces active oxygen species such as the hydroxyl radical, superoxide, hydrogen peroxide or singlet oxygen upon reaction with oxygen molecules. These reactive oxygen species cause damage to various cellular components including lipids, proteins and nucleic acids. The first step of cercosporin biosynthesis is performed by the polyketide synthase CTB1 which catalyzes the formation of nor-toralactone. The starter unit acyltransferase (SAT) domain of CTB1 initiates polyketide extension by the selective utilization of acetyl-CoA, which is elongated to the heptaketide in the beta-ketoacyl synthase (KS) domain by successive condensations with six malonyl units introduced by the malonyl acyltransferase (MAT) domain. The product template (PT) domain catalyzes C4-C9 and C2-C11 aldol cyclizations and dehydrations to a trihydroxynaphthalene, which is thought to be delivered to the thioesterase (TE) domain for product release. The bifunctional enzyme CTB3 then methylates nor-toralactone to toralactone before conducting an unusual oxidative aromatic ring opening. The O-methyltransferase CTB2 further methylates the nascent OH-6 of the CBT3 product, blocking further oxidation at this site before the reductase CTB6 reduces the 2-oxopropyl ketone at position C7, giving naphthalene. The FAD-dependent monooxygenase CTB5 in concert with the multicopper oxidase CTB12 are responsible for homodimerization of naphthalene with CTB7 installing the dioxepine moiety, finally producing cercosporin. The fasciclin domain-containing protein CTB11 might act with CTB5 and CTB12 whereas the roles of CTB9 and CTB10 have still to be elucidated. This chain is Dehydratase CTB10, found in Cercospora beticola (Sugarbeet leaf spot fungus).